Consider the following 738-residue polypeptide: Protein Aster-B (738 aa).

Positions 1–81 are disordered; that stretch reads MKGFKLSCTA…SGGKNSKKSQ (81 aa). Positions 8 to 19 are enriched in polar residues; the sequence is CTASNSNRSTPA. Phosphoserine occurs at positions 28 and 30. Over residues 41 to 51 the composition is skewed to basic and acidic residues; it reads MVEKGSDHSSD. A compositionally biased stretch (low complexity) spans 59–70; sequence QGVQRSCSSQSG. In terms of domain architecture, GRAM spans 96 to 163; it reads EDFRKLFKQL…KDICSMTKEK (68 aa). Residues 254-299 form a disordered region; the sequence is EENEVNDSSSKSSIETKPDASPQLPKKSITNSTLTSTGSSEAPVSF. Over residues 259-268 the composition is skewed to polar residues; that stretch reads NDSSSKSSIE. Residue Ser-274 is modified to Phosphoserine. The segment covering 281–295 has biased composition (polar residues); it reads SITNSTLTSTGSSEA. The 172-residue stretch at 372–543 folds into the VASt domain; the sequence is SGRQYVNEVF…ELTKTESTYL (172 aa). Tyr-389 is subject to Phosphotyrosine. Phosphoserine is present on residues Ser-550 and Ser-581. Residues Thr-584, Thr-585, and Thr-587 each carry the phosphothreonine modification. A helical membrane pass occupies residues 623–643; sequence LLLVISCVICFSLVLLVVLNM.

As to expression, highly expressed in the adrenal gland (at protein level) and brain. Also found in the kidney, testis and macrophages.

The protein localises to the endoplasmic reticulum membrane. The protein resides in the cell membrane. Cholesterol transporter that mediates non-vesicular transport of cholesterol from the plasma membrane (PM) to the endoplasmic reticulum (ER). Contains unique domains for binding cholesterol and the PM, thereby serving as a molecular bridge for the transfer of cholesterol from the PM to the ER. Plays a crucial role in cholesterol homeostasis in the adrenal gland and has the unique ability to localize to the PM based on the level of membrane cholesterol. In lipid-poor conditions localizes to the ER membrane and in response to excess cholesterol in the PM is recruited to the endoplasmic reticulum-plasma membrane contact sites (EPCS) which is mediated by the GRAM domain. At the EPCS, the sterol-binding VASt/ASTER domain binds to the cholesterol in the PM and facilitates its transfer from the PM to ER. This chain is Protein Aster-B (Gramd1b), found in Mus musculus (Mouse).